The sequence spans 383 residues: MKNITLLGATGSIGKSTLSVVDLHSDKFNIFTLSANTNWQLMLELCNKYQPNYAIMVDESSAEKLSTIITTDTQILSGTQALDKVVAHQDTDFVMAAIVGTAGMSSALCAVKAGKRIMLANKESLILAGDIFMKAVEEFNAELIPVDSEHSAIFQCLQSGRSGLNKIQLTASGGPFLHTPISKFKYITPNQACAHPNWSMGRKISVDSATMMNKGLEVIEAYYLFSLTPEQIDVVVHPQSIVHSSVYYKDGSTLSQLGKPDMRTVISYAMSYPQRINSGVTALDLTNTPALEFYQPDFEKFTCLKLAFETLNKGGNAMITMNAANEIAVEYFLNHQINFLDIPKIIDQTLSAMKHTTPNSLEEVVNNDLVAREMTREIIKQYG.

NADPH contacts are provided by Thr10, Gly11, Ser12, Ile13, Asn38, and Asn121. Lys122 contacts 1-deoxy-D-xylulose 5-phosphate. Glu123 contacts NADPH. Mn(2+) is bound at residue Asp147. 1-deoxy-D-xylulose 5-phosphate contacts are provided by Ser148, Glu149, Ser172, and His195. Glu149 provides a ligand contact to Mn(2+). Gly201 is an NADPH binding site. Residues Ser208, Asn213, Lys214, and Glu217 each coordinate 1-deoxy-D-xylulose 5-phosphate. A Mn(2+)-binding site is contributed by Glu217.

The protein belongs to the DXR family. Mg(2+) serves as cofactor. Requires Mn(2+) as cofactor.

The enzyme catalyses 2-C-methyl-D-erythritol 4-phosphate + NADP(+) = 1-deoxy-D-xylulose 5-phosphate + NADPH + H(+). Its pathway is isoprenoid biosynthesis; isopentenyl diphosphate biosynthesis via DXP pathway; isopentenyl diphosphate from 1-deoxy-D-xylulose 5-phosphate: step 1/6. Catalyzes the NADPH-dependent rearrangement and reduction of 1-deoxy-D-xylulose-5-phosphate (DXP) to 2-C-methyl-D-erythritol 4-phosphate (MEP). This Ruthia magnifica subsp. Calyptogena magnifica protein is 1-deoxy-D-xylulose 5-phosphate reductoisomerase.